Consider the following 283-residue polypeptide: Succinate dehydrogenase [ubiquinone] iron-sulfur subunit, mitochondrial (283 aa).

The 80-residue stretch at 66–145 folds into the 2Fe-2S ferredoxin-type domain; sequence KKPTLQTYSI…PVKIYPLPHM (80 aa). C105, C110, C113, and C125 together coordinate [2Fe-2S] cluster. The region spanning 186 to 216 is the 4Fe-4S ferredoxin-type domain; that stretch reads DRKKLDGMYECILCACCSTSCPSYWWNQDEY. C196, C199, and C202 together coordinate [4Fe-4S] cluster. C206 provides a ligand contact to [3Fe-4S] cluster. A ubiquinone is bound at residue W211. C253 and C259 together coordinate [3Fe-4S] cluster. Residue C263 coordinates [4Fe-4S] cluster.

The protein belongs to the succinate dehydrogenase/fumarate reductase iron-sulfur protein family. Component of complex II composed of four subunits: a flavoprotein (FP), an iron-sulfur protein (IP), and a cytochrome b composed of a large and a small subunit. [2Fe-2S] cluster serves as cofactor. The cofactor is [3Fe-4S] cluster. It depends on [4Fe-4S] cluster as a cofactor.

The protein resides in the mitochondrion inner membrane. It carries out the reaction a quinone + succinate = fumarate + a quinol. It functions in the pathway carbohydrate metabolism; tricarboxylic acid cycle; fumarate from succinate (eukaryal route): step 1/1. Iron-sulfur protein (IP) subunit of succinate dehydrogenase (SDH) that is involved in complex II of the mitochondrial electron transport chain and is responsible for transferring electrons from succinate to ubiquinone (coenzyme Q). The chain is Succinate dehydrogenase [ubiquinone] iron-sulfur subunit, mitochondrial (SDH2) from Uromyces fabae (Rust fungus).